Reading from the N-terminus, the 145-residue chain is Mannitol-specific phosphotransferase enzyme IIA component (145 aa).

A PTS EIIA type-2 domain is found at 4 to 143 (TILSTETIKV…QEVLAFLGEV (140 aa)). Residue His-64 is the Tele-phosphohistidine intermediate of the active site. His-64 bears the Phosphohistidine; by HPr mark.

Its subcellular location is the cytoplasm. Functionally, the phosphoenolpyruvate-dependent sugar phosphotransferase system (sugar PTS), a major carbohydrate active transport system, catalyzes the phosphorylation of incoming sugar substrates concomitantly with their translocation across the cell membrane. The enzyme II CmtAB PTS system is involved in D-mannitol transport. In Halalkalibacterium halodurans (strain ATCC BAA-125 / DSM 18197 / FERM 7344 / JCM 9153 / C-125) (Bacillus halodurans), this protein is Mannitol-specific phosphotransferase enzyme IIA component (mtlF).